The following is a 216-amino-acid chain: Glycerol-3-phosphate acyltransferase (216 aa).

Transmembrane regions (helical) follow at residues 4–24 (TIIGLILAYLLGSIPTGLWIG), 71–91 (LPFFLHIEGVSPLVFGLLAVI), 113–133 (VVLGFSPAFFVYLIVIFASIL), 144–164 (VLSAVIAILSALLFPLVGFIL), and 165–185 (PSYDLFFTLIIIALALIIILR).

The protein belongs to the PlsY family. Probably interacts with PlsX.

The protein localises to the cell membrane. The enzyme catalyses an acyl phosphate + sn-glycerol 3-phosphate = a 1-acyl-sn-glycero-3-phosphate + phosphate. Its pathway is lipid metabolism; phospholipid metabolism. Its function is as follows. Catalyzes the transfer of an acyl group from acyl-phosphate (acyl-PO(4)) to glycerol-3-phosphate (G3P) to form lysophosphatidic acid (LPA). This enzyme utilizes acyl-phosphate as fatty acyl donor, but not acyl-CoA or acyl-ACP. The sequence is that of Glycerol-3-phosphate acyltransferase from Streptococcus sanguinis (strain SK36).